The sequence spans 248 residues: Tyrosine recombinase XerD-like (248 aa).

The Core-binding (CB) domain occupies 1–72 (MKSYIEPFIA…TANQFLYYLY (72 aa)). The region spanning 85–248 (DTMKVMRTEK…PVTLEKYYKS (164 aa)) is the Tyr recombinase domain. Active-site residues include K149 and R213. The active-site O-(3'-phospho-DNA)-tyrosine intermediate is the Y245.

It belongs to the 'phage' integrase family. XerD-like subfamily.

The protein resides in the cytoplasm. Functionally, putative tyrosine recombinase. Not involved in the cutting and rejoining of the recombining DNA molecules on dif(SL) site. The polypeptide is Tyrosine recombinase XerD-like (Streptococcus pyogenes serotype M6 (strain ATCC BAA-946 / MGAS10394)).